Here is a 352-residue protein sequence, read N- to C-terminus: Phospho-N-acetylmuramoyl-pentapeptide-transferase (352 aa).

A run of 10 helical transmembrane segments spans residues 10-30 (YMFF…ALFL), 67-87 (TMGG…CADL), 88-108 (NNFY…IGLV), 129-149 (LLSQ…MGIN), 159-179 (YALF…IISS), 191-211 (GLAT…LYLS), 227-247 (GLGE…GFLW), 255-275 (VFMG…LGIV), 280-300 (ILLL…ILQV), and 329-349 (KIIV…LISI).

The protein belongs to the glycosyltransferase 4 family. MraY subfamily. It depends on Mg(2+) as a cofactor.

The protein resides in the cell inner membrane. It carries out the reaction UDP-N-acetyl-alpha-D-muramoyl-L-alanyl-gamma-D-glutamyl-meso-2,6-diaminopimeloyl-D-alanyl-D-alanine + di-trans,octa-cis-undecaprenyl phosphate = di-trans,octa-cis-undecaprenyl diphospho-N-acetyl-alpha-D-muramoyl-L-alanyl-D-glutamyl-meso-2,6-diaminopimeloyl-D-alanyl-D-alanine + UMP. Its pathway is cell wall biogenesis; peptidoglycan biosynthesis. Its function is as follows. Catalyzes the initial step of the lipid cycle reactions in the biosynthesis of the cell wall peptidoglycan: transfers peptidoglycan precursor phospho-MurNAc-pentapeptide from UDP-MurNAc-pentapeptide onto the lipid carrier undecaprenyl phosphate, yielding undecaprenyl-pyrophosphoryl-MurNAc-pentapeptide, known as lipid I. The protein is Phospho-N-acetylmuramoyl-pentapeptide-transferase of Campylobacter lari (strain RM2100 / D67 / ATCC BAA-1060).